The chain runs to 250 residues: Peptidyl-tRNA hydrolase (250 aa).

Tyr14 provides a ligand contact to tRNA. His19 serves as the catalytic Proton acceptor. Positions 64, 66, and 112 each coordinate tRNA. The tract at residues 192–250 (MGDGNQRPGGVKTDPAQLEKAPPKAQSHIRQARQNQKKPNIPESGPMAEMLKKLLGKKD) is disordered. A compositionally biased stretch (polar residues) spans 219-229 (HIRQARQNQKK). A compositionally biased stretch (basic and acidic residues) spans 241–250 (MLKKLLGKKD).

This sequence belongs to the PTH family. In terms of assembly, monomer.

The protein resides in the cytoplasm. It carries out the reaction an N-acyl-L-alpha-aminoacyl-tRNA + H2O = an N-acyl-L-amino acid + a tRNA + H(+). Its function is as follows. Hydrolyzes ribosome-free peptidyl-tRNAs (with 1 or more amino acids incorporated), which drop off the ribosome during protein synthesis, or as a result of ribosome stalling. In terms of biological role, catalyzes the release of premature peptidyl moieties from peptidyl-tRNA molecules trapped in stalled 50S ribosomal subunits, and thus maintains levels of free tRNAs and 50S ribosomes. This is Peptidyl-tRNA hydrolase from Brucella abortus (strain 2308).